An 85-amino-acid polypeptide reads, in one-letter code: Large ribosomal subunit protein bL27 (85 aa).

Residues 1–20 (MATKKAGGSTRNGRDSEAKR) form a disordered region.

It belongs to the bacterial ribosomal protein bL27 family.

In Actinobacillus succinogenes (strain ATCC 55618 / DSM 22257 / CCUG 43843 / 130Z), this protein is Large ribosomal subunit protein bL27.